The following is a 520-amino-acid chain: MRAFRSAANFGAASNIYRKSFTPASIASNRFVSARMSSIMTDNARPNTDKVVQDIADYIHDYKIDSSVAMETARLCFLDTLGCGLEGLKYQQCANIVGPVVPGTIVPNGTKVPGTDYQVDPVRGAFNIGTIIRWLDFNDCWLAAEWGHPSDNLGGILAVADWQTRSAKAGLEGKVFKVKDVLEGMIKAHEIQGGLAIENSFNRVGLDHVVLVKIASTAVVSGMLGLSREQTADAISQAFVDGQSLRTYRHAPNTMSRKSWAAGDATSRAVNLALLVKKGEGGMPSILTAKTWGFYDVLFGGKEFKFQRPYGSYVMENVLFKISFPAEFHAQTACESAMLLHEELKKLGKTSDDIASIKIRTQEAAMRIIDKKGPLHNYADRDHCIQYMVAIPLIHGRLTADDYTDEIASDPRIDALREKMECVEDKRFSEEYHAPDKRYIGNAIEITLKDGTVLDEIEVNYPIGHRQRREEGTPVLLEKFARHLRGRFPEGQVEKILAASNQDIVNMDIDEYVDLYVKKD.

A mitochondrion-targeting transit peptide spans 1–37 (MRAFRSAANFGAASNIYRKSFTPASIASNRFVSARMS).

This sequence belongs to the PrpD family. In terms of assembly, monomer.

It is found in the mitochondrion. It catalyses the reaction (2S,3S)-2-methylcitrate = 2-methyl-cis-aconitate + H2O. The protein operates within organic acid metabolism; propanoate degradation. Several bivalent metal ions, such as nickel, copper, zinc, mercury, and lead, inhibit the activity to some extent. Inhibited by structural analogs such as citrate, cis-aconitate, isocitrate, 2-methylisocitrate, tricarballylate and fluorocitrate, but not by trans-aconitate or adipate. Component of the methylcitrate cycle that catalyzes the dehydration of 2-methylcitrate to 2-methyl-cis-aconitate. The methylcitrate cycle is a metabolic pathway for the consumption of propionic acid. The protein is 2-methylcitrate dehydratase, mitochondrial of Yarrowia lipolytica (strain CLIB 122 / E 150) (Yeast).